Reading from the N-terminus, the 113-residue chain is Type III endosome membrane protein TEMP (113 aa).

Residues 1-22 are disordered; the sequence is MNETNKTLVGPSELPTASAVAP. The Extracellular portion of the chain corresponds to 1 to 29; the sequence is MNETNKTLVGPSELPTASAVAPGPGTGAR. A glycan (N-linked (GlcNAc...) asparagine) is linked at asparagine 5. Residues 30-50 form a helical; Signal-anchor for type III membrane protein membrane-spanning segment; it reads AWPVLVGFVLGAVVLSLLIAL. Over 51 to 113 the chain is Cytoplasmic; sequence AAKCHLCRRY…TEGSRDHFSL (63 aa). Residues 66–113 form a disordered region; the sequence is HRPLPETGRGGRPQVAEDEDDDGFIEDNYIQPGTGELGTEGSRDHFSL. The span at 81–90 shows a compositional bias: acidic residues; it reads AEDEDDDGFI.

The protein resides in the membrane. The protein localises to the early endosome. It is found in the recycling endosome. It localises to the cell membrane. Functionally, may be involved in membrane trafficking between endosomes and plasma membrane. The sequence is that of Type III endosome membrane protein TEMP (C1orf210) from Homo sapiens (Human).